Here is a 901-residue protein sequence, read N- to C-terminus: Probable inorganic carbon transporter subunit DabA (901 aa).

The Zn(2+) site is built by Cys424, Asp426, His606, and Cys621.

Belongs to the inorganic carbon transporter (TC 9.A.2) DabA family. As to quaternary structure, forms a complex with DabB. Requires Zn(2+) as cofactor.

The protein localises to the cell membrane. Its function is as follows. Part of an energy-coupled inorganic carbon pump. This Staphylococcus aureus (strain NCTC 8325 / PS 47) protein is Probable inorganic carbon transporter subunit DabA.